The primary structure comprises 395 residues: Acetate kinase (395 aa).

Asn8 contacts Mg(2+). Lys15 contributes to the ATP binding site. Arg90 contributes to the substrate binding site. Asp147 acts as the Proton donor/acceptor in catalysis. ATP-binding positions include 207–211 (HLGNG), 284–286 (DMR), and 330–334 (GIGEN). Residue Glu383 participates in Mg(2+) binding.

This sequence belongs to the acetokinase family. In terms of assembly, homodimer. Mg(2+) is required as a cofactor. The cofactor is Mn(2+).

The protein localises to the cytoplasm. It carries out the reaction acetate + ATP = acetyl phosphate + ADP. It functions in the pathway metabolic intermediate biosynthesis; acetyl-CoA biosynthesis; acetyl-CoA from acetate: step 1/2. Functionally, catalyzes the formation of acetyl phosphate from acetate and ATP. Can also catalyze the reverse reaction. This Enterococcus faecalis (strain ATCC 700802 / V583) protein is Acetate kinase.